Reading from the N-terminus, the 299-residue chain is Probable alpha-L-glutamate ligase (299 aa).

Positions 111–293 constitute an ATP-grasp domain; sequence LQALAAANIA…VATQMIAYLE (183 aa). ATP-binding positions include Lys-147, 184–185, Asp-193, and 217–219; these read DF and RAN. Mg(2+) is bound by residues Asp-254, Glu-266, and Asn-268. Mn(2+) contacts are provided by Asp-254, Glu-266, and Asn-268.

The protein belongs to the RimK family. Requires Mg(2+) as cofactor. Mn(2+) is required as a cofactor.

The chain is Probable alpha-L-glutamate ligase from Mannheimia succiniciproducens (strain KCTC 0769BP / MBEL55E).